A 524-amino-acid polypeptide reads, in one-letter code: Dihydromonacolin L monooxygenase mokC (524 aa).

Topologically, residues 1–25 (MTVPTDTVSRRLQSLAWSDIKQHAP) are cytoplasmic. The chain crosses the membrane as a helical; Signal-anchor for type II membrane protein span at residues 26-47 (WLPSSRTLVSGFLCLILLQILY). Residues 48 to 524 (SRGRKSDLRV…LMMRRRDEDL (477 aa)) lie on the Lumenal side of the membrane. Asparagine 396 and asparagine 401 each carry an N-linked (GlcNAc...) asparagine glycan. A heme-binding site is contributed by cysteine 467.

This sequence belongs to the cytochrome P450 family. Heme serves as cofactor.

Its subcellular location is the endoplasmic reticulum membrane. The enzyme catalyses dihydromonacolin L carboxylate + reduced [NADPH--hemoprotein reductase] + O2 = monacolin L carboxylate + oxidized [NADPH--hemoprotein reductase] + 2 H2O + H(+). The catalysed reaction is monacolin L carboxylate + reduced [NADPH--hemoprotein reductase] + O2 = monacolin J carboxylate + oxidized [NADPH--hemoprotein reductase] + H2O + H(+). Its pathway is polyketide biosynthesis; lovastatin biosynthesis. In terms of biological role, cytochrome P450 monooxygenase; part of the gene cluster that mediates the biosynthesis of monakolin K, also known as lovastatin, and which acts as a potent competitive inhibitor of HMG-CoA reductase. Monakolin K biosynthesis is performed in two stages. The first stage is catalyzed by the nonaketide synthase mokA, which belongs to type I polyketide synthases and catalyzes the iterative nine-step formation of the polyketide. This PKS stage is completed by the action of dehydrogenase mokE, which catalyzes the NADPH-dependent reduction of the unsaturated tetra-, penta- and heptaketide intermediates that arise during the mokA-mediated biosynthesis of the nonaketide chain and leads to dihydromonacolin L. Covalently bound dihydromonacolin L is released from mokA by the mokD esterase. Conversion of dihydromonacolin L into monacolin L and then monacolin J is subsequently performed with the participation of molecular oxygen and P450 monoogygenase mokC. Finally, mokF performs the conversion of monacoline J to monacoline K through the addition of the side-chain diketide moiety (2R)-2-methylbutanoate produced by the diketide synthase mokB. This Monascus pilosus (Red mold) protein is Dihydromonacolin L monooxygenase mokC.